The primary structure comprises 606 residues: NADH-ubiquinone oxidoreductase chain 5 (606 aa).

Helical transmembrane passes span 4–24, 38–58, 87–107, 117–137, 140–160, 171–191, 211–233, 241–261, 273–293, 301–320, 325–347, 366–386, 413–433, 457–477, 488–508, and 584–604; these read FSSLMLASLSVLTLPIMSSIL, NIISYAFITSLIPTMMFIHSG, MIFVPVALFVTWSIMEFSLWY, FFKYLLTFLITMMILVTANNL, LFIGWEGVGIMSFLLIGWWYG, AILYNRIGDIGFIMAMAWFLF, LPLLGLLLAATGKSAQFGLHPWL, TPVSALLHSSTMVVAGVFLLI, IQSLTLCLGAITTLFTAICAL, IIAFSTSSQLGLMIVTIGIN, AFLHICTHAFFKAMLFMCSGSII, MPFTTTSLIIGSLALTGMPFL, LIATSLTAVYSTRIIFFALLG, LLIGSIFAGFFISNNIYPTTI, LTALTVTILGFTLALELSLIT, and IKLYFLSFLITLTLSMLLFNL.

The protein belongs to the complex I subunit 5 family. As to quaternary structure, core subunit of respiratory chain NADH dehydrogenase (Complex I) which is composed of 45 different subunits.

It localises to the mitochondrion inner membrane. The enzyme catalyses a ubiquinone + NADH + 5 H(+)(in) = a ubiquinol + NAD(+) + 4 H(+)(out). In terms of biological role, core subunit of the mitochondrial membrane respiratory chain NADH dehydrogenase (Complex I) which catalyzes electron transfer from NADH through the respiratory chain, using ubiquinone as an electron acceptor. Essential for the catalytic activity and assembly of complex I. The polypeptide is NADH-ubiquinone oxidoreductase chain 5 (MT-ND5) (Equus asinus (Donkey)).